The sequence spans 228 residues: UPF0173 metal-dependent hydrolase lin1612 (228 aa).

This sequence belongs to the UPF0173 family.

The sequence is that of UPF0173 metal-dependent hydrolase lin1612 from Listeria innocua serovar 6a (strain ATCC BAA-680 / CLIP 11262).